A 268-amino-acid chain; its full sequence is GTP cyclohydrolase 1 type 2 homolog (268 aa).

Residues His66, His67, Asp105, His227, and Glu231 each contribute to the a divalent metal cation site.

Belongs to the GTP cyclohydrolase I type 2/NIF3 family. As to quaternary structure, homohexamer.

The polypeptide is GTP cyclohydrolase 1 type 2 homolog (Clostridium acetobutylicum (strain ATCC 824 / DSM 792 / JCM 1419 / IAM 19013 / LMG 5710 / NBRC 13948 / NRRL B-527 / VKM B-1787 / 2291 / W)).